Consider the following 549-residue polypeptide: Inner kinetochore subunit MIF2 (549 aa).

Residues 47–275 (RKSRRKSSLF…RRQASDVVRT (229 aa)) form a disordered region. 2 stretches are compositionally biased toward polar residues: residues 56-65 (FLPSTLNGDT) and 96-108 (RSSL…NFLS). Residues 114-124 (EPIEEEPEQEE) show a composition bias toward acidic residues. The segment covering 151–163 (TRYSLDTSESPSV) has biased composition (polar residues). Acidic residues predominate over residues 203–225 (LLEDELEDDGFIPESEEDGDYIE). Low complexity predominate over residues 226-237 (SDSSLDSGSDSA). Acidic residues predominate over residues 238–262 (SDSDGDNTYQEVEEEAEVNTNDNED). Over residues 263–275 (DYIRRQASDVVRT) the composition is skewed to basic and acidic residues. The residue at position 325 (serine 325) is a Phosphoserine. Positions 335–345 (QRRKKQKKKPT) are enriched in basic residues. The tract at residues 335–374 (QRRKKQKKKPTPTRPYNYVPTGRPRGRPKKDPNAKENLIP) is disordered. The a.T hook DNA-binding region spans 356–364 (GRPRGRPKK).

Belongs to the CENP-C/MIF2 family. Component of the inner kinetochore constitutive centromere-associated network (CCAN) (also known as central kinetochore CTF19 complex in yeast), which is composed of at least AME1, CHL4, CNN1, CTF3, CTF19, IML3, MCM16, MCM21, MCM22, MHF1, MHF2, MIF2, NKP1, NKP2, OKP1 and WIP1. Interacts with CBF1.

The protein resides in the nucleus. Its subcellular location is the chromosome. It localises to the centromere. It is found in the kinetochore. Component of the kinetochore, a multiprotein complex that assembles on centromeric DNA and attaches chromosomes to spindle microtubules, mediating chromosome segregation and sister chromatid segregation during meiosis and mitosis. Component of the inner kinetochore constitutive centromere-associated network (CCAN), which serves as a structural platform for outer kinetochore assembly. In Saccharomyces cerevisiae (strain ATCC 204508 / S288c) (Baker's yeast), this protein is Inner kinetochore subunit MIF2 (MIF2).